A 126-amino-acid polypeptide reads, in one-letter code: MSWQQYVDEQLTGAGLSQGAILGANDGGVWAKSSGINITKPEGDGIAALFKNPAEVFAKGALIGGVKYMGIKGDPQSIYGKKGATGCVLVRTGQAIIVGIYDDKVQPGSAALIVEKLGDYLRDNGY.

This sequence belongs to the profilin family. As to quaternary structure, occurs in many kinds of cells as a complex with monomeric actin in a 1:1 ratio.

It localises to the cytoplasm. The protein resides in the cytoskeleton. Functionally, binds to actin and affects the structure of the cytoskeleton. At high concentrations, profilin prevents the polymerization of actin, whereas it enhances it at low concentrations. By binding to PIP2, it inhibits the formation of IP3 and DG. The polypeptide is Profilin-1 (proA) (Dictyostelium discoideum (Social amoeba)).